We begin with the raw amino-acid sequence, 347 residues long: Protein FAM50 homolog (347 aa).

Basic and acidic residues predominate over residues 77–113 (EDIVREREKKLAQKKEEKDREKLKALEAKQAEKDRQR). The segment at 77 to 142 (EDIVREREKK…EDEEEPLEIK (66 aa)) is disordered. Residues 123–138 (PEEDEESFDDEDEEEP) are compositionally biased toward acidic residues.

Belongs to the FAM50 family.

The polypeptide is Protein FAM50 homolog (Aedes aegypti (Yellowfever mosquito)).